The following is a 428-amino-acid chain: Glutamate-1-semialdehyde 2,1-aminomutase (428 aa).

The residue at position 265 (lysine 265) is an N6-(pyridoxal phosphate)lysine.

This sequence belongs to the class-III pyridoxal-phosphate-dependent aminotransferase family. HemL subfamily. As to quaternary structure, homodimer. Pyridoxal 5'-phosphate serves as cofactor.

It is found in the cytoplasm. It carries out the reaction (S)-4-amino-5-oxopentanoate = 5-aminolevulinate. Its pathway is porphyrin-containing compound metabolism; protoporphyrin-IX biosynthesis; 5-aminolevulinate from L-glutamyl-tRNA(Glu): step 2/2. The protein is Glutamate-1-semialdehyde 2,1-aminomutase of Legionella pneumophila (strain Paris).